Here is a 385-residue protein sequence, read N- to C-terminus: Proteinase-activated receptor 4 (385 aa).

An N-terminal signal peptide occupies residues 1–17; that stretch reads MWGRLLLWPLVLGFSLS. Positions 18-47 are cleaved as a propeptide — removed for receptor activation; sequence GGTQTPSVYDESGSTGGGDDSTPSILPAPR. The segment at 21-42 is disordered; sequence QTPSVYDESGSTGGGDDSTPSI. The Extracellular segment spans residues 48 to 82; that stretch reads GYPGQVCANDSDTLELPDSSRALLLGWVPTRLVPA. N-linked (GlcNAc...) asparagine glycosylation is present at N56. Residues 83-103 form a helical membrane-spanning segment; sequence LYGLVLVVGLPANGLALWVLA. At 104 to 108 the chain is on the cytoplasmic side; the sequence is TQAPR. Residues 109 to 129 traverse the membrane as a helical segment; that stretch reads LPSTMLLMNLAAADLLLALAL. Over 130–151 the chain is Extracellular; that stretch reads PPRIAYHLRGQRWPFGEAACRL. C149 and C228 are disulfide-bonded. A helical transmembrane segment spans residues 152–172; it reads ATAALYGHMYGSVLLLAAVSL. Topologically, residues 173–192 are cytoplasmic; it reads DRYLALVHPLRARALRGRRL. A helical transmembrane segment spans residues 193-213; sequence ALGLCMAAWLMAAALALPLTL. The Extracellular portion of the chain corresponds to 214–247; it reads QRQTFRLARSDRVLCHDALPLDAQASHWQPAFTC. The helical transmembrane segment at 248-268 threads the bilayer; it reads LALLGCFLPLLAMLLCYGATL. Over 269–283 the chain is Cytoplasmic; that stretch reads HTLAASGRRYGHALR. The chain crosses the membrane as a helical span at residues 284-304; sequence LTAVVLASAVAFFVPSNLLLL. Topologically, residues 305 to 319 are extracellular; it reads LHYSDPSPSAWGNLY. Residues 320–343 form a helical membrane-spanning segment; it reads GAYVPSLALSTLNSCVDPFIYYYV. The Cytoplasmic portion of the chain corresponds to 344–385; it reads SAEFRDKVRAGLFQRSPGDTVASKASAEGGSRGMGTHSSLLQ. A disordered region spans residues 362–385; the sequence is DTVASKASAEGGSRGMGTHSSLLQ.

The protein belongs to the G-protein coupled receptor 1 family. In terms of processing, a proteolytic cleavage generates a new N-terminus that functions as a tethered ligand. Widely expressed, with highest levels in lung, pancreas, thyroid, testis and small intestine. Not expressed in brain, kidney, spinal cord and peripheral blood leukocytes. Also detected in platelets.

Its subcellular location is the cell membrane. Activated upon interaction by mucunain, a cowhage (Mucuna pruriens) plant cysteine proteinase. Receptor for activated thrombin or trypsin coupled to G proteins that stimulate phosphoinositide hydrolysis. May play a role in platelets activation. This is Proteinase-activated receptor 4 (F2RL3) from Homo sapiens (Human).